Reading from the N-terminus, the 161-residue chain is Disulfide bond formation protein B (161 aa).

The Cytoplasmic portion of the chain corresponds to 1-8 (MQANSRAY). A helical transmembrane segment spans residues 9-25 (FLLIAFISFGLVGFALY). At 26 to 43 (LQFEKGYQPCPLCIMQRF) the chain is on the periplasmic side. Residues cysteine 35 and cysteine 38 are joined by a disulfide bond. The helical transmembrane segment at 44-58 (AFIGIGLFSLLAVIA) threads the bilayer. The Cytoplasmic segment spans residues 59–63 (QNTRS). The chain crosses the membrane as a helical span at residues 64–81 (LWQGLGMLSGVGGIAVAV). At 82–136 (YHVSLLLNPKASCGIDPLENWVNALPTAKVLPQVFYSDGLCTAPLPPVLGLSVPA) the chain is on the periplasmic side. Cysteine 94 and cysteine 122 are joined by a disulfide. The chain crosses the membrane as a helical span at residues 137-155 (WSLIWLFILTLTLAVGLIR). Topologically, residues 156–161 (REKNFR) are cytoplasmic.

It belongs to the DsbB family.

The protein resides in the cell inner membrane. Functionally, required for disulfide bond formation in some periplasmic proteins. Acts by oxidizing the DsbA protein. The protein is Disulfide bond formation protein B of Cupriavidus pinatubonensis (strain JMP 134 / LMG 1197) (Cupriavidus necator (strain JMP 134)).